The chain runs to 215 residues: Adenylate kinase (215 aa).

ATP is bound at residue 10-15 (GAGKGT). An NMP region spans residues 30–59 (STGDIFRANISGKTELGMKAKGYMDKGLLV). Residues Thr31, Arg36, 57–59 (LLV), 85–88 (GFPR), and Gln92 each bind AMP. Residues 126 to 163 (GRRVCSKCGASYHIEYNPTKVEGICDLCGSPVVQRKDD) are LID. Position 127 (Arg127) interacts with ATP. The Zn(2+) site is built by Cys130 and Cys133. 136 to 137 (SY) is a binding site for ATP. The Zn(2+) site is built by Cys150 and Cys153. 2 residues coordinate AMP: Arg160 and Arg171. Gln199 lines the ATP pocket.

The protein belongs to the adenylate kinase family. In terms of assembly, monomer.

Its subcellular location is the cytoplasm. It catalyses the reaction AMP + ATP = 2 ADP. It participates in purine metabolism; AMP biosynthesis via salvage pathway; AMP from ADP: step 1/1. Its function is as follows. Catalyzes the reversible transfer of the terminal phosphate group between ATP and AMP. Plays an important role in cellular energy homeostasis and in adenine nucleotide metabolism. This Clostridium acetobutylicum (strain ATCC 824 / DSM 792 / JCM 1419 / IAM 19013 / LMG 5710 / NBRC 13948 / NRRL B-527 / VKM B-1787 / 2291 / W) protein is Adenylate kinase.